We begin with the raw amino-acid sequence, 570 residues long: Phosphoglucomutase 1 (570 aa).

An N-acetylserine modification is found at Ser2. Alpha-D-glucose 1,6-bisphosphate contacts are provided by Arg24 and Ser120. Ser120 acts as the Phosphoserine intermediate in catalysis. Positions 120, 291, 293, and 295 each coordinate Mg(2+). Ser120 is modified (phosphoserine). Residues Asp295, Arg296, Thr360, Glu379, Ser381, and Lys392 each contribute to the alpha-D-glucose 1,6-bisphosphate site.

This sequence belongs to the phosphohexose mutase family. In terms of assembly, monomer. It depends on Mg(2+) as a cofactor.

It localises to the cytoplasm. The enzyme catalyses alpha-D-glucose 1-phosphate = alpha-D-glucose 6-phosphate. The catalysed reaction is O-phospho-L-seryl-[protein] + alpha-D-glucose 1-phosphate = alpha-D-glucose 1,6-bisphosphate + L-seryl-[protein]. It catalyses the reaction alpha-D-glucose 1,6-bisphosphate + L-seryl-[protein] = O-phospho-L-seryl-[protein] + alpha-D-glucose 6-phosphate. Its function is as follows. Minor phosphoglucomutase isozyme that catalyzes the reversible interconversion of alpha-D-glucose 1-phosphate and alpha-D-glucose 6-phosphate. The mechanism proceeds via the intermediate compound alpha-D-glucose 1,6-bisphosphate. Constitutes about 10-20% of the phosphoglucomutase activity in the cell. Key enzyme in hexose metabolism. The forward reaction is an essential step in the energy metabolism of galactose since the product of the galactose pathway enzymes in yeast is glucose 1-phosphate. The reverse reaction is an essential step for biosynthesis when carbon sources other than galactose are the energy source because glucose 1-phosphate is the starting point for the synthesis of UDP-glucose, which acts as a precursor for the synthesis of oligosaccharides and trehalose. The protein is Phosphoglucomutase 1 of Saccharomyces cerevisiae (strain ATCC 204508 / S288c) (Baker's yeast).